The following is a 440-amino-acid chain: C-terminal-binding protein 1 (440 aa).

NAD(+) is bound by residues serine 100, 180–185 (IGLGRV), aspartate 204, 237–243 (CGLNEHN), 264–266 (TAR), and aspartate 290. Arginine 266 is a catalytic residue. The active site involves glutamate 295. Catalysis depends on histidine 315, which acts as the Proton donor. 315 to 318 (HAAW) lines the NAD(+) pocket. Residues 409-440 (HAHPAVAHPPHAPSPGQTIKPEADRDHPSDQL) form a disordered region. Positions 429–440 (PEADRDHPSDQL) are enriched in basic and acidic residues.

It belongs to the D-isomer specific 2-hydroxyacid dehydrogenase family. Requires NAD(+) as cofactor.

It is found in the nucleus. Corepressor targeting diverse transcription regulators. Has dehydrogenase activity. The chain is C-terminal-binding protein 1 (ctbp1) from Xenopus laevis (African clawed frog).